The chain runs to 441 residues: 3-phosphoshikimate 1-carboxyvinyltransferase (441 aa).

3 residues coordinate 3-phosphoshikimate: lysine 25, serine 26, and arginine 30. Residue lysine 25 coordinates phosphoenolpyruvate. 2 residues coordinate phosphoenolpyruvate: glycine 97 and arginine 125. Serine 169, glutamine 170, aspartate 311, and lysine 338 together coordinate 3-phosphoshikimate. Glutamine 170 serves as a coordination point for phosphoenolpyruvate. Aspartate 311 (proton acceptor) is an active-site residue. The phosphoenolpyruvate site is built by arginine 342, arginine 383, and lysine 410.

This sequence belongs to the EPSP synthase family. As to quaternary structure, monomer.

The protein localises to the cytoplasm. The catalysed reaction is 3-phosphoshikimate + phosphoenolpyruvate = 5-O-(1-carboxyvinyl)-3-phosphoshikimate + phosphate. Its pathway is metabolic intermediate biosynthesis; chorismate biosynthesis; chorismate from D-erythrose 4-phosphate and phosphoenolpyruvate: step 6/7. Functionally, catalyzes the transfer of the enolpyruvyl moiety of phosphoenolpyruvate (PEP) to the 5-hydroxyl of shikimate-3-phosphate (S3P) to produce enolpyruvyl shikimate-3-phosphate and inorganic phosphate. This Chlamydia muridarum (strain MoPn / Nigg) protein is 3-phosphoshikimate 1-carboxyvinyltransferase.